The primary structure comprises 1032 residues: GPI inositol-deacylase (1032 aa).

N12 is a glycosylation site (N-linked (GlcNAc...) asparagine). Residues 15 to 35 traverse the membrane as a helical segment; the sequence is ILTLVSFFGLVLFYLTWYLYT. S195 is an active-site residue. Residues N520 and N555 are each glycosylated (N-linked (GlcNAc...) asparagine). 2 helical membrane-spanning segments follow: residues 703 to 723 and 740 to 760; these read LATI…QVKH and ICSP…TPIM. N-linked (GlcNAc...) asparagine glycosylation occurs at N784. The next 3 membrane-spanning stretches (helical) occupy residues 805 to 825, 861 to 880, and 884 to 903; these read LWFI…LTFY, WANR…PIYM, and FAYV…ILVA. N907 carries an N-linked (GlcNAc...) asparagine glycan. Residues 916–936 traverse the membrane as a helical segment; the sequence is SLLMLMLWVLPINVPILVVFV. Residues N938 and N942 are each glycosylated (N-linked (GlcNAc...) asparagine). A run of 2 helical transmembrane segments spans residues 943-963 and 985-1005; these read WTTP…ILLM and AFLA…TYWI.

It belongs to the GPI inositol-deacylase family.

It is found in the endoplasmic reticulum membrane. In terms of biological role, involved in inositol deacylation of GPI-anchored proteins which plays important roles in the quality control and ER-associated degradation of GPI-anchored proteins. This is GPI inositol-deacylase (BST1) from Debaryomyces hansenii (strain ATCC 36239 / CBS 767 / BCRC 21394 / JCM 1990 / NBRC 0083 / IGC 2968) (Yeast).